We begin with the raw amino-acid sequence, 82 residues long: MTHKREIQGNVVKISGDKTASIVVERRVMHPRYHKVVKRFKKYLVHDERNELKVGDEIVAIECRPLSKTKSYRLKSVVVGVK.

It belongs to the universal ribosomal protein uS17 family. In terms of assembly, part of the 30S ribosomal subunit.

In terms of biological role, one of the primary rRNA binding proteins, it binds specifically to the 5'-end of 16S ribosomal RNA. This chain is Small ribosomal subunit protein uS17, found in Sulfurimonas denitrificans (strain ATCC 33889 / DSM 1251) (Thiomicrospira denitrificans (strain ATCC 33889 / DSM 1251)).